A 568-amino-acid chain; its full sequence is Potassium-transporting ATPase potassium-binding subunit (568 aa).

10 helical membrane passes run 1-21 (MWLT…LAVP), 60-80 (GLAL…LLRA), 129-149 (AITF…AGFI), 174-194 (VMLP…VPQA), 251-271 (IHIL…GSML), 278-298 (WVLF…VFTA), 381-401 (VGLI…GMMI), 420-440 (VMLA…LAAV), 488-508 (IGLA…ALAG), and 528-548 (PLFM…TFLP).

The protein belongs to the KdpA family. As to quaternary structure, the system is composed of three essential subunits: KdpA, KdpB and KdpC.

The protein localises to the cell inner membrane. Part of the high-affinity ATP-driven potassium transport (or Kdp) system, which catalyzes the hydrolysis of ATP coupled with the electrogenic transport of potassium into the cytoplasm. This subunit binds the periplasmic potassium ions and delivers the ions to the membrane domain of KdpB through an intramembrane tunnel. The protein is Potassium-transporting ATPase potassium-binding subunit of Delftia acidovorans (strain DSM 14801 / SPH-1).